Consider the following 103-residue polypeptide: Small ribosomal subunit protein uS10 (103 aa).

This sequence belongs to the universal ribosomal protein uS10 family. Part of the 30S ribosomal subunit.

In terms of biological role, involved in the binding of tRNA to the ribosomes. In Chromohalobacter salexigens (strain ATCC BAA-138 / DSM 3043 / CIP 106854 / NCIMB 13768 / 1H11), this protein is Small ribosomal subunit protein uS10.